Here is a 562-residue protein sequence, read N- to C-terminus: NAD-dependent malic enzyme 1 (562 aa).

Tyr101 acts as the Proton donor in catalysis. Arg154 lines the NAD(+) pocket. Lys172 serves as the catalytic Proton acceptor. Positions 243, 244, and 267 each coordinate a divalent metal cation. NAD(+) contacts are provided by Asp267 and Asn415.

This sequence belongs to the malic enzymes family. Homotetramer. Mg(2+) serves as cofactor. Mn(2+) is required as a cofactor.

It catalyses the reaction (S)-malate + NAD(+) = pyruvate + CO2 + NADH. The enzyme catalyses oxaloacetate + H(+) = pyruvate + CO2. The sequence is that of NAD-dependent malic enzyme 1 from Vibrio vulnificus (strain YJ016).